The following is a 1041-amino-acid chain: Nuclear migration protein unc-83 (1041 aa).

Disordered stretches follow at residues 258–283, 453–498, and 613–646; these read VGHLTASDTEESEADEEDRHSQTETV, IHGQ…LEDD, and IRNRDSDTAPEHSDAAQAYEWDEYNPPQKDDSIS. Basic residues predominate over residues 456–465; the sequence is QKKPLRRASR. Over residues 613 to 626 the composition is skewed to basic and acidic residues; it reads IRNRDSDTAPEHSD. Coiled-coil stretches lie at residues 785–816 and 931–951; these read RSKEDVAKTLDAVTAIERRLSSERQELRDLLA and KAELSIYSNALARLKDRFNDM. The 56-residue stretch at 986–1041 folds into the KASH domain; that stretch reads TENEPLTIAEAISSSRLIKFTFALSLLAALAAIFYYHVFGKPFGPHVTYVNGPPPV. A helical; Anchor for type IV membrane protein membrane pass occupies residues 1005–1024; the sequence is FTFALSLLAALAAIFYYHVF.

Component of the unc-83-unc-84 LINC complex which contains at least unc-83 and unc-84. Within the unc-83-unc-84 LINC complex interacts with unc-84 (via C-terminus); the interaction is probably required to recruit unc-83 to the nuclear envelope where it then recruits dynein and kinesin-1 complexes to regulate nuclear migration. Interacts with bicd-1 and dlc-1. Interacts with nud-2 (via C-terminus); the interaction is direct, and is required for recruitment of nud-2 to the nuclear envelope. Interacts with klc-2; the interaction is direct. In terms of tissue distribution, predominantly expressed in migratory nuclei. Expressed in a variety of cell-types, including cells around the pharynx and in the uterus.

The protein localises to the nucleus membrane. It localises to the nucleus outer membrane. Functionally, cargo-specific adapter that is involved in nuclear migration during development and thereafter. Component of the unc-83-unc-84 LINC (LInker of Nucleoskeleton and Cytoskeleton) complex where it interacts with unc-84 to form a bridge connecting the nuclear envelope to the cytoskeleton which allows for nuclear transport along microtubules. Within the complex, connects the nuclear envelope to the microtubule cytoskeleton through the kinesin-1 light chain protein klc-2 (most likely within the Kinesin 1 motor complex) to regulate nuclear migrations. Moreover, within the complex, also recruits the large microtubule-associated bicd-1-dlc-1-egal-1 and lis-1-nud-2 complexes to the nuclear envelope to regulate both the bidirectional migration of nuclei and the extent of nuclear migrations. Not required for centrosome attachment to the nucleus. This Caenorhabditis elegans protein is Nuclear migration protein unc-83.